The primary structure comprises 465 residues: Ribulose bisphosphate carboxylase large chain (465 aa).

Lysine 4 is subject to N6,N6,N6-trimethyllysine. Asparagine 113 and threonine 163 together coordinate substrate. Lysine 165 (proton acceptor) is an active-site residue. Substrate is bound at residue lysine 167. Residues lysine 191, aspartate 193, and glutamate 194 each coordinate Mg(2+). Lysine 191 carries the N6-carboxylysine modification. Histidine 284 functions as the Proton acceptor in the catalytic mechanism. Residues arginine 285, histidine 317, and serine 369 each contribute to the substrate site.

This sequence belongs to the RuBisCO large chain family. Type I subfamily. As to quaternary structure, heterohexadecamer of 8 large chains and 8 small chains; disulfide-linked. The disulfide link is formed within the large subunit homodimers. Requires Mg(2+) as cofactor. In terms of processing, the disulfide bond which can form in the large chain dimeric partners within the hexadecamer appears to be associated with oxidative stress and protein turnover.

It localises to the plastid. Its subcellular location is the chloroplast. It catalyses the reaction 2 (2R)-3-phosphoglycerate + 2 H(+) = D-ribulose 1,5-bisphosphate + CO2 + H2O. It carries out the reaction D-ribulose 1,5-bisphosphate + O2 = 2-phosphoglycolate + (2R)-3-phosphoglycerate + 2 H(+). Its function is as follows. RuBisCO catalyzes two reactions: the carboxylation of D-ribulose 1,5-bisphosphate, the primary event in carbon dioxide fixation, as well as the oxidative fragmentation of the pentose substrate in the photorespiration process. Both reactions occur simultaneously and in competition at the same active site. This chain is Ribulose bisphosphate carboxylase large chain, found in Ulmus alata (Winged elm).